Reading from the N-terminus, the 528-residue chain is Chaperonin GroEL, chloroplastic (528 aa).

ATP is bound by residues 29-32 (TLGP), 86-90 (DGTTT), G415, 481-483 (NAA), and D497.

The protein belongs to the chaperonin (HSP60) family. Forms a cylinder of 14 subunits composed of two heptameric rings stacked back-to-back. Interacts with the co-chaperonin GroES.

The protein localises to the plastid. It is found in the chloroplast. The enzyme catalyses ATP + H2O + a folded polypeptide = ADP + phosphate + an unfolded polypeptide.. Together with its co-chaperonin GroES, plays an essential role in assisting protein folding. The GroEL-GroES system forms a nano-cage that allows encapsulation of the non-native substrate proteins and provides a physical environment optimized to promote and accelerate protein folding. This Trieres chinensis (Marine centric diatom) protein is Chaperonin GroEL, chloroplastic.